A 281-amino-acid polypeptide reads, in one-letter code: Large ribosomal subunit protein uL2 (281 aa).

The segment at Arg224–Lys281 is disordered.

The protein belongs to the universal ribosomal protein uL2 family. In terms of assembly, part of the 50S ribosomal subunit. Forms a bridge to the 30S subunit in the 70S ribosome.

One of the primary rRNA binding proteins. Required for association of the 30S and 50S subunits to form the 70S ribosome, for tRNA binding and peptide bond formation. It has been suggested to have peptidyltransferase activity; this is somewhat controversial. Makes several contacts with the 16S rRNA in the 70S ribosome. This Metamycoplasma arthritidis (strain 158L3-1) (Mycoplasma arthritidis) protein is Large ribosomal subunit protein uL2.